The primary structure comprises 393 residues: NAD(P)H-quinone oxidoreductase subunit H, chloroplastic (393 aa).

The protein belongs to the complex I 49 kDa subunit family. As to quaternary structure, NDH is composed of at least 16 different subunits, 5 of which are encoded in the nucleus.

Its subcellular location is the plastid. The protein localises to the chloroplast thylakoid membrane. It carries out the reaction a plastoquinone + NADH + (n+1) H(+)(in) = a plastoquinol + NAD(+) + n H(+)(out). The catalysed reaction is a plastoquinone + NADPH + (n+1) H(+)(in) = a plastoquinol + NADP(+) + n H(+)(out). NDH shuttles electrons from NAD(P)H:plastoquinone, via FMN and iron-sulfur (Fe-S) centers, to quinones in the photosynthetic chain and possibly in a chloroplast respiratory chain. The immediate electron acceptor for the enzyme in this species is believed to be plastoquinone. Couples the redox reaction to proton translocation, and thus conserves the redox energy in a proton gradient. This is NAD(P)H-quinone oxidoreductase subunit H, chloroplastic from Liriodendron tulipifera (Tuliptree).